The primary structure comprises 472 residues: Na(+)/H(+) antiporter NhaA (472 aa).

11 helical membrane passes run 48–68 (AGGI…NSAW), 91–111 (MSLH…VVGL), 129–149 (ALPV…YFAV), 157–177 (AGWG…LVLL), 185–205 (LIIF…LVIA), 210–230 (HEIS…LLLL), 237–257 (HAIP…HSGV), 337–357 (GPWV…GIDF), 374–394 (VCLG…WIAV), 410–430 (LLGV…ISQL), and 443–463 (LGIL…LYFG).

The protein belongs to the NhaA Na(+)/H(+) (TC 2.A.33) antiporter family.

Its subcellular location is the cell inner membrane. It carries out the reaction Na(+)(in) + 2 H(+)(out) = Na(+)(out) + 2 H(+)(in). In terms of biological role, na(+)/H(+) antiporter that extrudes sodium in exchange for external protons. In Syntrophobacter fumaroxidans (strain DSM 10017 / MPOB), this protein is Na(+)/H(+) antiporter NhaA.